Consider the following 585-residue polypeptide: MDALLGTGPRRARGCLGAAGPTSSGRAARTPAAPWARFSAWLECVCVVTFDLELGQALELVYPNDFRLTDKEKSSICYLSFPDSHSGCLGDTQFSFRMRQCGGQRSPWHADDRHYNSRAPVALQREPAHYFGYVYFRQVKDSSVKRGYFQKSLVLVSRLPFVRLFQALLSLIAPEYFDKLAPCLEAVCSEIDQWPAPAPGQTLNLPVMGVVVQVRIPSRVDKSESSPPKQFDQENLLPAPVVLASVHELDLFRCFRPVLTHMQTLWELMLLGEPLLVLAPSPDVSSEMVLALTSCLQPLRFCCDFRPYFTIHDSEFKEFTTRTQAPPNVVLGVTNPFFIKTLQHWPHILRVGEPKMSGDLPKQVKLKKPSRLKTLDTKPGLYTAYTAHLHRDKALLKRLLKGVQKKRPSDVQSALLRRHLLELTQSFIIPLEHYMASLMPLQKSITPWKTPPQIQPFSQDDFLRSLEHAGPQLTCILKGDWLGLYRRFFKSPHFDGWYRQRHKEMALKLEALHLEAICEANIETWMKDKSEVEVVDLVLKLREKLVRAQGHQLPVKEATLQRAQLYIETVIGSLPKDLQAVLCPP.

In terms of domain architecture, uDENN spans 43-214 (ECVCVVTFDL…LPVMGVVVQV (172 aa)). One can recognise a cDENN domain in the interval 246–373 (VHELDLFRCF…VKLKKPSRLK (128 aa)). One can recognise a dDENN domain in the interval 375–499 (LDTKPGLYTA…KSPHFDGWYR (125 aa)).

Belongs to the DENND6 family.

The protein localises to the recycling endosome. It is found in the cytoplasm. Guanine nucleotide exchange factor (GEF) for RAB14. Also has some, lesser GEF activity towards RAB35. This chain is Protein DENND6B (DENND6B), found in Homo sapiens (Human).